The primary structure comprises 201 residues: MRAWYFDELPGHQKLPHMGEPVPNQKVYDLGVKHWKIPLDGHEETINQIAKERDYPNRDIINISKEGLGELYDEKMVYFFQEHMHEDEEIRYILDGTGYYDIRETPTDKWIRFQIEAEDLVIIPVGIYHRFTLDEGDYIKSIRLFRADPKWVYMYRSKEMDVNPYRLEYLKQTKEKLGLPVAPAAVGWGAWLWSWITWSKL.

Residues histidine 83, histidine 85, glutamate 89, and histidine 129 each contribute to the Fe(2+) site. Ni(2+) is bound by residues histidine 83, histidine 85, glutamate 89, and histidine 129.

This sequence belongs to the acireductone dioxygenase (ARD) family. Fe(2+) serves as cofactor. The cofactor is Ni(2+).

The protein localises to the cytoplasm. It localises to the nucleus. The catalysed reaction is 1,2-dihydroxy-5-(methylsulfanyl)pent-1-en-3-one + O2 = 4-methylsulfanyl-2-oxobutanoate + formate + 2 H(+). It carries out the reaction 1,2-dihydroxy-5-(methylsulfanyl)pent-1-en-3-one + O2 = 3-(methylsulfanyl)propanoate + CO + formate + 2 H(+). Its pathway is amino-acid biosynthesis; L-methionine biosynthesis via salvage pathway; L-methionine from S-methyl-5-thio-alpha-D-ribose 1-phosphate: step 5/6. Catalyzes 2 different reactions between oxygen and the acireductone 1,2-dihydroxy-3-keto-5-methylthiopentene (DHK-MTPene) depending upon the metal bound in the active site. Fe-containing acireductone dioxygenase (Fe-ARD) produces formate and 2-keto-4-methylthiobutyrate (KMTB), the alpha-ketoacid precursor of methionine in the methionine recycle pathway. Ni-containing acireductone dioxygenase (Ni-ARD) produces methylthiopropionate, carbon monoxide and formate, and does not lie on the methionine recycle pathway. The protein is Acireductone dioxygenase 2 of Coprinopsis cinerea (strain Okayama-7 / 130 / ATCC MYA-4618 / FGSC 9003) (Inky cap fungus).